A 347-amino-acid chain; its full sequence is Probable E3 ubiquitin-protein ligase DTX3 (347 aa).

The interval 113 to 157 (EHPEMHRAGPPPLRAAPLLPPGARGLPPPPPPLPPPLPPRLREEA) is disordered. A compositionally biased stretch (pro residues) spans 121–151 (GPPPLRAAPLLPPGARGLPPPPPPLPPPLPP). An RING-type zinc finger spans residues 164–205 (CPICLGEIQNAKTLEKCRHSFCEGCITRALQVKKACPMCGRF).

This sequence belongs to the Deltex family. In terms of assembly, homodimer. May form a heterodimers with other members of the Deltex family. Interacts with NOTCH1.

It localises to the cytoplasm. The catalysed reaction is S-ubiquitinyl-[E2 ubiquitin-conjugating enzyme]-L-cysteine + [acceptor protein]-L-lysine = [E2 ubiquitin-conjugating enzyme]-L-cysteine + N(6)-ubiquitinyl-[acceptor protein]-L-lysine.. It participates in protein modification; protein ubiquitination. Functionally, regulator of Notch signaling, a signaling pathway involved in cell-cell communications that regulates a broad spectrum of cell-fate determinations. Probably acts both as a positive and negative regulator of Notch, depending on the developmental and cell context. Functions as an ubiquitin ligase protein in vitro, suggesting that it may regulate the Notch pathway via some ubiquitin ligase activity. The chain is Probable E3 ubiquitin-protein ligase DTX3 (DTX3) from Homo sapiens (Human).